The chain runs to 500 residues: MTNQDVVMPDIAAAAAMPGSSGRAPLFACRGAAAVSASSMLGGGGAAYQAAVVAHVAPVPAIRPCASWVVEAMRASSPTRPAAAAVDAEYDAWTQRKHPSALGSFEQVAAAASGKRVVVFLDYDGTLSPIVADPDMAFMSDEMRAAVRDVAEHFPAAIVTGRCVDKVQSFVGLPELYYAGSHGMDIKGPSSNEEEDTKILLQPAREFLPVINKAYKALMEKTKSTPGARVENNKFCLSVHFRCVDEKRWNPLAEQVKAVLRDYPELKLTQGRKVLEIRPSIMWDKGKAVEFLLKSLGFDDDRRDVLPVYIGDDRTDEDAFKVLRKRGQGLGILVSKCAKETDASYSLQDPAEKYTNAGAHVFVTMLLTVVFTAAVALALVNAVNSHDFAAHLAGVDCRMGLAGPVRCPASGFVELLVLALHVVRCVLAILDRLHACLMSPSLQLSIASPCHGVPCSIGAVEASAIIVSDAPEGLISTLTTDHIYYMTVFPAKLALTSEEV.

This sequence belongs to the trehalose phosphatase family. It depends on a divalent metal cation as a cofactor.

The catalysed reaction is alpha,alpha-trehalose 6-phosphate + H2O = alpha,alpha-trehalose + phosphate. The protein operates within glycan biosynthesis; trehalose biosynthesis. Removes the phosphate from trehalose 6-phosphate to produce free trehalose. Trehalose accumulation in plant may improve abiotic stress tolerance. In Oryza sativa subsp. japonica (Rice), this protein is Probable trehalose-phosphate phosphatase 8 (TPP8).